A 387-amino-acid polypeptide reads, in one-letter code: Probable protein phosphatase 2C 25 (387 aa).

The 300-residue stretch at 52–351 (EFSFAVVQAN…DDITVVVVYI (300 aa)) folds into the PPM-type phosphatase domain. The Mn(2+) site is built by aspartate 83, glycine 84, aspartate 283, and aspartate 342.

It belongs to the PP2C family. Mg(2+) serves as cofactor. The cofactor is Mn(2+).

It catalyses the reaction O-phospho-L-seryl-[protein] + H2O = L-seryl-[protein] + phosphate. It carries out the reaction O-phospho-L-threonyl-[protein] + H2O = L-threonyl-[protein] + phosphate. This Oryza sativa subsp. japonica (Rice) protein is Probable protein phosphatase 2C 25.